A 389-amino-acid polypeptide reads, in one-letter code: Nuclear receptor subfamily 2 group F member 1-B (389 aa).

A disordered region spans residues 19–39 (DDQSAAGREHLQHRHSPKSAE). The segment at residues 51-126 (HVECVVCGDK…VGMRREAVQR (76 aa)) is a DNA-binding region (nuclear receptor). 2 NR C4-type zinc fingers span residues 54-74 (CVVCGDKSSGKHYGQFTCEGC) and 90-109 (CRANRNCPVDQHHRNQCQYC). Positions 152–378 (YLSGYISLLL…TLIRDMLLSG (227 aa)) constitute an NR LBD domain.

This sequence belongs to the nuclear hormone receptor family. NR2 subfamily. As to expression, expressed the retina, where expression is restricted to the outer nuclear layer.

The protein localises to the nucleus. In terms of biological role, putative transcription factor that is required in photoreceptor cells precursors during eye development. The polypeptide is Nuclear receptor subfamily 2 group F member 1-B (Danio rerio (Zebrafish)).